A 500-amino-acid polypeptide reads, in one-letter code: Prostacyclin synthase (500 aa).

A helical membrane pass occupies residues 1-20; that stretch reads MSWAVVFGLLAALLLLLLLT. Substrate contacts are provided by residues R106, L112, N287, 358–359, and R382; that span reads TR. C441 contacts heme.

The protein belongs to the cytochrome P450 family. Heme serves as cofactor.

It localises to the endoplasmic reticulum membrane. The catalysed reaction is prostaglandin H2 = prostaglandin I2. It catalyses the reaction a hydroperoxyeicosatetraenoate = an oxoeicosatetraenoate + H2O. The enzyme catalyses (15S)-hydroperoxy-(5Z,8Z,11Z,13E)-eicosatetraenoate = 15-oxo-(5Z,8Z,11Z,13E)-eicosatetraenoate + H2O. It carries out the reaction (15S)-hydroperoxy-(5Z,8Z,11Z,13E)-eicosatetraenoate + AH2 = (15S)-hydroxy-(5Z,8Z,11Z,13E)-eicosatetraenoate + A + H2O. In terms of biological role, catalyzes the biosynthesis and metabolism of eicosanoids. Catalyzes the isomerization of prostaglandin H2 to prostacyclin (= prostaglandin I2), a potent mediator of vasodilation and inhibitor of platelet aggregation. Additionally, displays dehydratase activity, toward hydroperoxyeicosatetraenoates (HPETEs), especially toward (15S)-hydroperoxy-(5Z,8Z,11Z,13E)-eicosatetraenoate (15(S)-HPETE). This is Prostacyclin synthase (PTGIS) from Bos taurus (Bovine).